The chain runs to 96 residues: uncharacterized protein (96 aa).

A run of 3 helical transmembrane segments spans residues 3-23 (KLTI…QLFA), 30-50 (TLGN…LASI), and 68-88 (IGLL…IIII).

The protein localises to the cell membrane. This is an uncharacterized protein from Bacillus subtilis (strain 168).